A 189-amino-acid chain; its full sequence is MVKVIASSVRKGNVLDVDGKLYVVLTAQNFHPGKGTPVTQVDMRRIVDGVKVSERWRTTEQVERAFVEDVSFQYLYEDGEGFHFMNPGNYDQVVVDVETMGDQKAYLQEGMSCILSIHEGIPLALELPRHVTLEITETEPVVKGQTASSSYKPAMLSNGVRTMVPPHINAGTRVVIATEDNSYVERAKD.

The protein belongs to the elongation factor P family.

It is found in the cytoplasm. It functions in the pathway protein biosynthesis; polypeptide chain elongation. Its function is as follows. Involved in peptide bond synthesis. Stimulates efficient translation and peptide-bond synthesis on native or reconstituted 70S ribosomes in vitro. Probably functions indirectly by altering the affinity of the ribosome for aminoacyl-tRNA, thus increasing their reactivity as acceptors for peptidyl transferase. This Rhizobium leguminosarum bv. trifolii (strain WSM2304) protein is Elongation factor P.